A 400-amino-acid chain; its full sequence is Homoserine O-acetyltransferase (400 aa).

Residues 1-22 (MMNVHPVKGPVATGGERPHEAD) are disordered. Positions 64–374 (NAILVCHALT…DKGHDAFLLD (311 aa)) constitute an AB hydrolase-1 domain. The active-site Nucleophile is S169. R239 serves as a coordination point for substrate. Residues D335 and H368 contribute to the active site. D369 is a substrate binding site.

The protein belongs to the AB hydrolase superfamily. MetX family. In terms of assembly, homodimer.

The protein resides in the cytoplasm. It carries out the reaction L-homoserine + acetyl-CoA = O-acetyl-L-homoserine + CoA. It functions in the pathway amino-acid biosynthesis; L-methionine biosynthesis via de novo pathway; O-acetyl-L-homoserine from L-homoserine: step 1/1. In terms of biological role, transfers an acetyl group from acetyl-CoA to L-homoserine, forming acetyl-L-homoserine. The chain is Homoserine O-acetyltransferase from Rhodopseudomonas palustris (strain HaA2).